A 377-amino-acid chain; its full sequence is Succinyl-diaminopimelate desuccinylase (377 aa).

Zn(2+) is bound at residue His-68. Asp-70 is a catalytic residue. Asp-101 is a binding site for Zn(2+). Residue Glu-135 is the Proton acceptor of the active site. Zn(2+) is bound by residues Glu-136, Glu-164, and His-350.

The protein belongs to the peptidase M20A family. DapE subfamily. In terms of assembly, homodimer. Zn(2+) is required as a cofactor. It depends on Co(2+) as a cofactor.

It catalyses the reaction N-succinyl-(2S,6S)-2,6-diaminopimelate + H2O = (2S,6S)-2,6-diaminopimelate + succinate. It functions in the pathway amino-acid biosynthesis; L-lysine biosynthesis via DAP pathway; LL-2,6-diaminopimelate from (S)-tetrahydrodipicolinate (succinylase route): step 3/3. Catalyzes the hydrolysis of N-succinyl-L,L-diaminopimelic acid (SDAP), forming succinate and LL-2,6-diaminopimelate (DAP), an intermediate involved in the bacterial biosynthesis of lysine and meso-diaminopimelic acid, an essential component of bacterial cell walls. The polypeptide is Succinyl-diaminopimelate desuccinylase (Acinetobacter baumannii (strain AB307-0294)).